We begin with the raw amino-acid sequence, 549 residues long: Hydroxylamine reductase (549 aa).

[4Fe-4S] cluster-binding residues include Cys-3, Cys-6, Cys-15, and Cys-21. His-248, Glu-272, Cys-316, Cys-403, Cys-431, Cys-456, Glu-490, and Lys-492 together coordinate hybrid [4Fe-2O-2S] cluster. Cys-403 carries the post-translational modification Cysteine persulfide.

The protein belongs to the HCP family. [4Fe-4S] cluster serves as cofactor. It depends on hybrid [4Fe-2O-2S] cluster as a cofactor.

Its subcellular location is the cytoplasm. The catalysed reaction is A + NH4(+) + H2O = hydroxylamine + AH2 + H(+). Functionally, catalyzes the reduction of hydroxylamine to form NH(3) and H(2)O. In Rhodospirillum rubrum (strain ATCC 11170 / ATH 1.1.1 / DSM 467 / LMG 4362 / NCIMB 8255 / S1), this protein is Hydroxylamine reductase.